A 705-amino-acid polypeptide reads, in one-letter code: Tetratricopeptide repeat protein 12 (705 aa).

Residue T71 is modified to Phosphothreonine. 3 TPR repeats span residues 106–139, 140–173, and 174–207; these read ADALKEKGNEAFAEGNYETAILRYSEGLEKLKDM, KVLYTNRAQAYMKLEDYEKALVDCEWALKCDEKC, and TKAYFHMGKANLALKNYSVSRECYKKILEINPKL.

In terms of tissue distribution, expressed in testis and in epithelial cells of trachea and bronchial tube.

It localises to the cytoplasm. Its function is as follows. Cytoplasmic protein that plays a role in the proper assembly of dynein arm complexes in motile cilia in both respiratory cells and sperm flagella. The sequence is that of Tetratricopeptide repeat protein 12 (TTC12) from Homo sapiens (Human).